Reading from the N-terminus, the 289-residue chain is UTP--glucose-1-phosphate uridylyltransferase 2 (289 aa).

It belongs to the UDPGP type 2 family.

The catalysed reaction is alpha-D-glucose 1-phosphate + UTP + H(+) = UDP-alpha-D-glucose + diphosphate. Its pathway is glycolipid metabolism; diglucosyl-diacylglycerol biosynthesis. Catalyzes the formation of UDP-glucose from glucose-1-phosphate and UTP. This is an intermediate step in the biosynthesis of diglucosyl-diacylglycerol (Glc2-DAG), i.e. a glycolipid found in the membrane, which is also used as a membrane anchor for lipoteichoic acid (LTA). The protein is UTP--glucose-1-phosphate uridylyltransferase 2 (gtaB2) of Staphylococcus saprophyticus subsp. saprophyticus (strain ATCC 15305 / DSM 20229 / NCIMB 8711 / NCTC 7292 / S-41).